The chain runs to 296 residues: 2-dehydropantoate 2-reductase (296 aa).

Residues 7–12, N94, and A120 contribute to the NADP(+) site; that span reads GPGAVG. Residue N94 participates in substrate binding. K175 serves as the catalytic Proton donor. Residues N179, N183, N193, and S245 each coordinate substrate. Position 257 (E257) interacts with NADP(+).

It belongs to the ketopantoate reductase family.

Its subcellular location is the cytoplasm. It carries out the reaction (R)-pantoate + NADP(+) = 2-dehydropantoate + NADPH + H(+). It participates in cofactor biosynthesis; (R)-pantothenate biosynthesis; (R)-pantoate from 3-methyl-2-oxobutanoate: step 2/2. Functionally, catalyzes the NADPH-dependent reduction of ketopantoate into pantoic acid. This Vibrio cholerae serotype O1 (strain ATCC 39315 / El Tor Inaba N16961) protein is 2-dehydropantoate 2-reductase (panE).